Reading from the N-terminus, the 376-residue chain is Chaperone protein DnaJ (376 aa).

The J domain occupies 5-70 (DYYEILGVSK…QKRAAYDQYG (66 aa)). The segment at 131–209 (GVTKEIRIPT…CHGHGRVERS (79 aa)) adopts a CR-type zinc-finger fold. Residues Cys-144, Cys-147, Cys-161, Cys-164, Cys-183, Cys-186, Cys-197, and Cys-200 each coordinate Zn(2+). CXXCXGXG motif repeat units follow at residues 144 to 151 (CDVCHGSG), 161 to 168 (CPTCHGSG), 183 to 190 (CPHCQGRG), and 197 to 204 (CNKCHGHG).

This sequence belongs to the DnaJ family. In terms of assembly, homodimer. Zn(2+) is required as a cofactor.

The protein localises to the cytoplasm. Functionally, participates actively in the response to hyperosmotic and heat shock by preventing the aggregation of stress-denatured proteins and by disaggregating proteins, also in an autonomous, DnaK-independent fashion. Unfolded proteins bind initially to DnaJ; upon interaction with the DnaJ-bound protein, DnaK hydrolyzes its bound ATP, resulting in the formation of a stable complex. GrpE releases ADP from DnaK; ATP binding to DnaK triggers the release of the substrate protein, thus completing the reaction cycle. Several rounds of ATP-dependent interactions between DnaJ, DnaK and GrpE are required for fully efficient folding. Also involved, together with DnaK and GrpE, in the DNA replication of plasmids through activation of initiation proteins. This Shigella flexneri serotype 5b (strain 8401) protein is Chaperone protein DnaJ.